The sequence spans 839 residues: DNA (cytosine-5)-methyltransferase CMT3 (839 aa).

Disordered regions lie at residues 1–38 (MAPKRKRPATKDDTTKSIPKPKKRAPKRAKTVKEEPVT) and 51–86 (LDEPIPESEAKSTWPDRYKPIEVQPPKASSRKKTKD). Over residues 19–30 (PKPKKRAPKRAK) the composition is skewed to basic residues. Positions 51–70 (LDEPIPESEAKSTWPDRYKP) are enriched in basic and acidic residues. A BAH domain is found at 108 to 227 (QIYELNDDAY…LPYDTFEAIQ (120 aa)). The SAM-dependent MTase C5-type domain maps to 269 to 813 (ATLLDLYSGC…YALGTAFQGL (545 aa)). Positions 382-447 (FTVDKIVGIS…LGYKSGILPL (66 aa)) constitute a Chromo domain. Residue cysteine 460 is part of the active site.

It belongs to the class I-like SAM-binding methyltransferase superfamily. C5-methyltransferase family. As to quaternary structure, homodimer. Interacts with HP1 and, through its chromodomain, with the N-terminal tail of histone H3 doubly methylated at 'Lys-9' and 'Lys-27'. Binds to JMJ24. In terms of processing, ubiquitinated by JMJ24, subsequently beingargeted to proteasomal degradation thus initiating the destabilization of the heterochromatic state of endogenous silenced loci.

It localises to the nucleus. It catalyses the reaction a 2'-deoxycytidine in DNA + S-adenosyl-L-methionine = a 5-methyl-2'-deoxycytidine in DNA + S-adenosyl-L-homocysteine + H(+). Involved in the CpXpG methylation (e.g. CHG cytosine) and in gene silencing. Methylates preferentially transposon-related sequences. Functionally redundant to DRM1/DRM2 to maintain non-CpG methylation. Involved in RNA-directed DNA methylation. The polypeptide is DNA (cytosine-5)-methyltransferase CMT3 (Arabidopsis thaliana (Mouse-ear cress)).